The sequence spans 100 residues: Small ribosomal subunit protein uS14 (100 aa).

It belongs to the universal ribosomal protein uS14 family. As to quaternary structure, part of the 30S ribosomal subunit. Contacts proteins S3 and S10.

Its function is as follows. Binds 16S rRNA, required for the assembly of 30S particles and may also be responsible for determining the conformation of the 16S rRNA at the A site. This Prochlorococcus marinus (strain AS9601) protein is Small ribosomal subunit protein uS14.